Reading from the N-terminus, the 753-residue chain is MSIFNKVTKTFQWGQHTVTMETGEIARQASGAVLVNIDDTVVLATVVASKQAKSGQDFFPLTVDYIEKTYAAGKIPGSFFKREAKPSELETLTSRLIDRPIRPLFPEGFYNDVHVVIHTVSLNPEVDADIAALIATSAALSVSGIPFNGPIGAARVGFINGEYVLNPGQTQRKDSQMDLVVAGTEAAVLMVESEAQQLPEDVMLGAVVFGHEQGRIAIDAIHELVREAGKPVWDWVAPAKDEELIAKVAALGDEALRTAYQIRNKQSRTQACREAYAAVKAGLTAQGVEFDGVKVEGMLFDIEARIVRSQILAGEPRIDGRDTRTVRPIEIRNSVLPRTHGSALFTRGETQALVVSTLGTERDAQRIDALAGEFEDRFLFHYNMPPFATGEVGRMGSTKRREIGHGRLAKRALAACLPSKEEFPYTIRVVSEITESNGSSSMASVCGGCLSMMDAGVPMKAHVAGIAMGLIKEDNRFAVLTDILGDEDHLGDMDFKVAGTTSGITALQMDIKIQGITKEIMQVALAQAKEARMHILGKMQEAMGEAKAEISSFAPKLYTMKINPEKIRDVIGKGGSTIRALTEETGTQIDIGEDGTITIASSDAAKADEAKRRIEEITAEVEIGKIYEGPVTKILDFGALVNLLPGKDGLLHISQIAHERVERVADYLQEGQIIKVKVMETDEKGRVKLSLKALTERPAGMERSDRPAPAEREFRQPREPRQQREFREPREPREPRDGGRPAAEGEQQQQQQQ.

Residues Asp-488 and Asp-494 each contribute to the Mg(2+) site. One can recognise a KH domain in the interval 555-614 (PKLYTMKINPEKIRDVIGKGGSTIRALTEETGTQIDIGEDGTITIASSDAAKADEAKRRI). One can recognise an S1 motif domain in the interval 624 to 692 (GKIYEGPVTK…EKGRVKLSLK (69 aa)). The segment at 692–753 (KALTERPAGM…EGEQQQQQQQ (62 aa)) is disordered. The span at 699–739 (AGMERSDRPAPAEREFRQPREPRQQREFREPREPREPRDGG) shows a compositional bias: basic and acidic residues.

Belongs to the polyribonucleotide nucleotidyltransferase family. It depends on Mg(2+) as a cofactor.

The protein localises to the cytoplasm. It catalyses the reaction RNA(n+1) + phosphate = RNA(n) + a ribonucleoside 5'-diphosphate. Involved in mRNA degradation. Catalyzes the phosphorolysis of single-stranded polyribonucleotides processively in the 3'- to 5'-direction. The sequence is that of Polyribonucleotide nucleotidyltransferase from Delftia acidovorans (strain DSM 14801 / SPH-1).